The chain runs to 304 residues: N-acetylglucosaminyl-phosphatidylinositol de-N-acetylase (304 aa).

At 1-20 (MKMLRRTKVNFSKLLYKITK) the chain is on the lumenal side. The chain crosses the membrane as a helical span at residues 21–38 (LAIVLTILYIYFTPKIVS). Residues 39–304 (RNNASLQHIF…FVNEFDVYTY (266 aa)) lie on the Cytoplasmic side of the membrane.

It belongs to the PIGL family.

Its subcellular location is the endoplasmic reticulum membrane. The catalysed reaction is a 6-(N-acetyl-alpha-D-glucosaminyl)-1-(1,2-diacyl-sn-glycero-3-phospho)-1D-myo-inositol + H2O = a 6-(alpha-D-glucosaminyl)-1-(1,2-diacyl-sn-glycero-3-phospho)-1D-myo-inositol + acetate. Its pathway is glycolipid biosynthesis; glycosylphosphatidylinositol-anchor biosynthesis. Its function is as follows. Involved in the second step of GPI biosynthesis. De-N-acetylation of N-acetylglucosaminyl-phosphatidylinositol. The sequence is that of N-acetylglucosaminyl-phosphatidylinositol de-N-acetylase (GPI12) from Saccharomyces cerevisiae (strain ATCC 204508 / S288c) (Baker's yeast).